Reading from the N-terminus, the 486-residue chain is N-succinylglutamate 5-semialdehyde dehydrogenase (486 aa).

220–225 contacts NAD(+); it reads GSSRTG. Active-site residues include Glu243 and Cys277.

It belongs to the aldehyde dehydrogenase family. AstD subfamily.

The catalysed reaction is N-succinyl-L-glutamate 5-semialdehyde + NAD(+) + H2O = N-succinyl-L-glutamate + NADH + 2 H(+). It functions in the pathway amino-acid degradation; L-arginine degradation via AST pathway; L-glutamate and succinate from L-arginine: step 4/5. Catalyzes the NAD-dependent reduction of succinylglutamate semialdehyde into succinylglutamate. This Shewanella baltica (strain OS155 / ATCC BAA-1091) protein is N-succinylglutamate 5-semialdehyde dehydrogenase.